The following is a 67-amino-acid chain: Large ribosomal subunit protein uL29 (67 aa).

This sequence belongs to the universal ribosomal protein uL29 family.

The protein is Large ribosomal subunit protein uL29 of Acetivibrio thermocellus (strain ATCC 27405 / DSM 1237 / JCM 9322 / NBRC 103400 / NCIMB 10682 / NRRL B-4536 / VPI 7372) (Clostridium thermocellum).